Consider the following 430-residue polypeptide: Adenylosuccinate synthetase (430 aa).

Residues G13 to K19 and G41 to T43 contribute to the GTP site. D14 functions as the Proton acceptor in the catalytic mechanism. Residues D14 and G41 each contribute to the Mg(2+) site. IMP contacts are provided by residues D14–K17, N39–H42, T130, R144, Q225, T240, and R304. The active-site Proton donor is the H42. Substrate is bound at residue A300–R306. Residues R306, K332–D334, and S414–G416 each bind GTP.

This sequence belongs to the adenylosuccinate synthetase family. In terms of assembly, homodimer. Mg(2+) is required as a cofactor.

The protein resides in the cytoplasm. The catalysed reaction is IMP + L-aspartate + GTP = N(6)-(1,2-dicarboxyethyl)-AMP + GDP + phosphate + 2 H(+). It participates in purine metabolism; AMP biosynthesis via de novo pathway; AMP from IMP: step 1/2. Functionally, plays an important role in the de novo pathway of purine nucleotide biosynthesis. Catalyzes the first committed step in the biosynthesis of AMP from IMP. The polypeptide is Adenylosuccinate synthetase (Xanthomonas oryzae pv. oryzae (strain PXO99A)).